The sequence spans 541 residues: Chaperonin GroEL 2 (541 aa).

ATP contacts are provided by residues 30–33 (TLGP), Lys-51, 87–91 (DGTTT), Gly-414, and Asp-495.

Belongs to the chaperonin (HSP60) family. As to quaternary structure, forms a cylinder of 14 subunits composed of two heptameric rings stacked back-to-back. Interacts with the co-chaperonin GroES.

It localises to the cytoplasm. It carries out the reaction ATP + H2O + a folded polypeptide = ADP + phosphate + an unfolded polypeptide.. Together with its co-chaperonin GroES, plays an essential role in assisting protein folding. The GroEL-GroES system forms a nano-cage that allows encapsulation of the non-native substrate proteins and provides a physical environment optimized to promote and accelerate protein folding. The sequence is that of Chaperonin GroEL 2 from Cereibacter sphaeroides (Rhodobacter sphaeroides).